We begin with the raw amino-acid sequence, 130 residues long: Glycine cleavage system H protein (130 aa).

The region spanning Thr-24–Lys-106 is the Lipoyl-binding domain. Position 65 is an N6-lipoyllysine (Lys-65).

It belongs to the GcvH family. As to quaternary structure, the glycine cleavage system is composed of four proteins: P, T, L and H. Requires (R)-lipoate as cofactor.

In terms of biological role, the glycine cleavage system catalyzes the degradation of glycine. The H protein shuttles the methylamine group of glycine from the P protein to the T protein. The polypeptide is Glycine cleavage system H protein (Saccharophagus degradans (strain 2-40 / ATCC 43961 / DSM 17024)).